We begin with the raw amino-acid sequence, 483 residues long: Protein disulfide-isomerase 5-3 (483 aa).

N53, N74, and N99 each carry an N-linked (GlcNAc...) asparagine glycan. Positions 133–263 constitute a Thioredoxin domain; sequence EETKEEFPDG…IVKMVEGLVA (131 aa). The Nucleophile role is filled by C170. N-linked (GlcNAc...) asparagine glycosylation is found at N279, N326, and N376. A helical membrane pass occupies residues 442 to 462; sequence FSHFITNLCAIIGGVFTVAGI.

The protein belongs to the protein disulfide isomerase family. In terms of tissue distribution, widely expressed.

The protein localises to the membrane. Functionally, acts as a protein-folding catalyst that interacts with nascent polypeptides to catalyze the formation, isomerization, and reduction or oxidation of disulfide bonds. The chain is Protein disulfide-isomerase 5-3 (PDIL5-3) from Arabidopsis thaliana (Mouse-ear cress).